The sequence spans 567 residues: Urease subunit alpha (567 aa).

In terms of domain architecture, Urease spans 129 to 567 (GGIDVHVHFI…VPMSQRYFLF (439 aa)). Residues His134, His136, and Lys217 each coordinate Ni(2+). At Lys217 the chain carries N6-carboxylysine. His219 contributes to the substrate binding site. Residues His246 and His272 each coordinate Ni(2+). His320 (proton donor) is an active-site residue. Asp360 is a Ni(2+) binding site.

This sequence belongs to the metallo-dependent hydrolases superfamily. Urease alpha subunit family. Heterotrimer of UreA (gamma), UreB (beta) and UreC (alpha) subunits. Three heterotrimers associate to form the active enzyme. The cofactor is Ni cation. Carboxylation allows a single lysine to coordinate two nickel ions.

The protein localises to the cytoplasm. The catalysed reaction is urea + 2 H2O + H(+) = hydrogencarbonate + 2 NH4(+). It functions in the pathway nitrogen metabolism; urea degradation; CO(2) and NH(3) from urea (urease route): step 1/1. In Blochmanniella floridana, this protein is Urease subunit alpha.